Here is a 181-residue protein sequence, read N- to C-terminus: Probable RNA 2'-phosphotransferase (181 aa).

Belongs to the KptA/TPT1 family.

In terms of biological role, removes the 2'-phosphate from RNA via an intermediate in which the phosphate is ADP-ribosylated by NAD followed by a presumed transesterification to release the RNA and generate ADP-ribose 1''-2''-cyclic phosphate (APPR&gt;P). May function as an ADP-ribosylase. This is Probable RNA 2'-phosphotransferase from Nostoc punctiforme (strain ATCC 29133 / PCC 73102).